Reading from the N-terminus, the 359-residue chain is MTLYDRALKLMFLLPPERIHGIISGALQTLHLATPVNRVMEKAVRVHDPVLRQTVFGVDFPAPLGLAAGFDKNAEAIDSWGAIGFGYAEMGTVTPKSQPGNPTPRLFRLPEDKAILNRMGFNNKGALVVADNLRARRSRDVVGINIGKNKTSEDAVADYRATSTLLGQLADYLVVNVSSPNTPGLRDLQAVEELRPILEVVKKSTTTPVLVKIAPDLSDEDIDAVADLAVELELAGIVATNTTISRSGLKTPASKVEKMGAGGISGAPLENRSLEVLKRLHERVGDKLVLVSVGGISTPEQAWERITAGASLLQGYTPFIYGGLGWIRGIHRGIAAQIKAHGLDSIEQAVGSGLEWKAL.

FMN contacts are provided by residues 68-72 (AGFDK) and T92. K72 is a binding site for substrate. Residue 117 to 121 (NRMGF) coordinates substrate. Positions 145 and 176 each coordinate FMN. Position 176 (N176) interacts with substrate. Residue S179 is the Nucleophile of the active site. Position 181 (N181) interacts with substrate. 2 residues coordinate FMN: K212 and T240. Substrate is bound at residue 241 to 242 (NT). FMN is bound by residues G266, G295, and 316 to 317 (YT).

This sequence belongs to the dihydroorotate dehydrogenase family. Type 2 subfamily. In terms of assembly, monomer. FMN is required as a cofactor.

Its subcellular location is the cell membrane. It catalyses the reaction (S)-dihydroorotate + a quinone = orotate + a quinol. Its pathway is pyrimidine metabolism; UMP biosynthesis via de novo pathway; orotate from (S)-dihydroorotate (quinone route): step 1/1. Its function is as follows. Catalyzes the conversion of dihydroorotate to orotate with quinone as electron acceptor. In Corynebacterium striatum, this protein is Dihydroorotate dehydrogenase (quinone).